Here is a 235-residue protein sequence, read N- to C-terminus: Adenosine 5'-phosphosulfate reductase (235 aa).

Residues cysteine 121, cysteine 122, cysteine 204, and cysteine 207 each coordinate [4Fe-4S] cluster. Cysteine 230 functions as the Nucleophile; cysteine thiosulfonate intermediate in the catalytic mechanism.

It belongs to the PAPS reductase family. CysH subfamily. [4Fe-4S] cluster is required as a cofactor.

The protein localises to the cytoplasm. It catalyses the reaction [thioredoxin]-disulfide + sulfite + AMP + 2 H(+) = adenosine 5'-phosphosulfate + [thioredoxin]-dithiol. It functions in the pathway sulfur metabolism; hydrogen sulfide biosynthesis; sulfite from sulfate. In terms of biological role, catalyzes the formation of sulfite from adenosine 5'-phosphosulfate (APS) using thioredoxin as an electron donor. The sequence is that of Adenosine 5'-phosphosulfate reductase from Geobacillus thermodenitrificans (strain NG80-2).